A 250-amino-acid polypeptide reads, in one-letter code: Small ribosomal subunit protein uS5 (250 aa).

Residues 1 to 22 (MNVVETSSEMNSNVEKASTPKQ) show a composition bias toward polar residues. Residues 1-40 (MNVVETSSEMNSNVEKASTPKQENNKRFERKSRPSSRQKV) are disordered. The region spanning 45–108 (FEEKVVTIRR…KEAKKNLVSV (64 aa)) is the S5 DRBM domain.

Belongs to the universal ribosomal protein uS5 family. In terms of assembly, part of the 30S ribosomal subunit. Contacts proteins S4 and S8.

Its function is as follows. With S4 and S12 plays an important role in translational accuracy. In terms of biological role, located at the back of the 30S subunit body where it stabilizes the conformation of the head with respect to the body. The polypeptide is Small ribosomal subunit protein uS5 (Mycoplasma capricolum subsp. capricolum (strain California kid / ATCC 27343 / NCTC 10154)).